Here is a 392-residue protein sequence, read N- to C-terminus: Chalcone synthase (392 aa).

Residue cysteine 165 is part of the active site.

It belongs to the thiolase-like superfamily. Chalcone/stilbene synthases family.

It carries out the reaction (E)-4-coumaroyl-CoA + 3 malonyl-CoA + 3 H(+) = 2',4,4',6'-tetrahydroxychalcone + 3 CO2 + 4 CoA. The protein operates within secondary metabolite biosynthesis; flavonoid biosynthesis. In terms of biological role, the primary product of this enzyme is 4,2',4',6'-tetrahydroxychalcone (also termed naringenin-chalcone or chalcone) which can under specific conditions spontaneously isomerize into naringenin. In Persea americana (Avocado), this protein is Chalcone synthase (CHS).